Reading from the N-terminus, the 102-residue chain is Small ribosomal subunit protein uS10 (102 aa).

The protein belongs to the universal ribosomal protein uS10 family. Part of the 30S ribosomal subunit.

In terms of biological role, involved in the binding of tRNA to the ribosomes. This Parafrankia sp. (strain EAN1pec) protein is Small ribosomal subunit protein uS10.